The primary structure comprises 331 residues: Neurogenic differentiation factor 4 (331 aa).

A disordered region spans residues 1 to 80 (MSKTFVKSKE…GPKKKKMTKA (80 aa)). A compositionally biased stretch (acidic residues) spans 52–64 (DSIEEEEEEEEDG). A compositionally biased stretch (basic residues) spans 67–79 (PKRRGPKKKKMTK). The bHLH domain occupies 87 to 139 (ARRVKANARERTRMHGLNDALDNLRRVMPCYSKTQKLSKIETLRLARNYIWAL). The interval 246–265 (TPPYEGPLTPPLSISGNFSL) is disordered.

Efficient DNA binding requires dimerization with another bHLH protein. In terms of processing, serine or threonine phosphorylation within the basic region may regulate neurogenic activity.

The protein resides in the nucleus. In terms of biological role, probably acts as a transcriptional activator. Mediates neuronal differentiation. Required for the regulation of amacrine cell fate specification in the retina. The protein is Neurogenic differentiation factor 4 (NEUROD4) of Homo sapiens (Human).